The chain runs to 49 residues: Large ribosomal subunit protein bL33A (49 aa).

Belongs to the bacterial ribosomal protein bL33 family.

This chain is Large ribosomal subunit protein bL33A, found in Staphylococcus aureus (strain COL).